Consider the following 169-residue polypeptide: Thaumatin-like pathogenesis-related protein 2 (169 aa).

The first 21 residues, 1–21 (MATSSAVLFFLLAVFAAGASA), serve as a signal peptide directing secretion.

Belongs to the thaumatin family.

Its function is as follows. Associated with resistance against stem rust fungi. This is Thaumatin-like pathogenesis-related protein 2 (RASTL-2) from Avena sativa (Oat).